We begin with the raw amino-acid sequence, 352 residues long: Elongation factor Ts (352 aa).

Residues 81 to 84 (TDFV) form an involved in Mg(2+) ion dislocation from EF-Tu region.

The protein belongs to the EF-Ts family.

The protein resides in the cytoplasm. Its function is as follows. Associates with the EF-Tu.GDP complex and induces the exchange of GDP to GTP. It remains bound to the aminoacyl-tRNA.EF-Tu.GTP complex up to the GTP hydrolysis stage on the ribosome. The chain is Elongation factor Ts from Campylobacter hominis (strain ATCC BAA-381 / DSM 21671 / CCUG 45161 / LMG 19568 / NCTC 13146 / CH001A).